Here is a 268-residue protein sequence, read N- to C-terminus: Protein DEEPER ROOTING 1 (268 aa).

A compositionally biased stretch (low complexity) spans 11 to 21 (LNGKQGNKKPN). The segment at 11–39 (LNGKQGNKKPNTVPITTHPAKQEPREEFS) is disordered. Basic and acidic residues predominate over residues 30–39 (AKQEPREEFS). The IGT motif signature appears at 44–50 (GLLAIGT). Residues 220 to 246 (SRAASMKKYLEDRQIPTKKESNTEDDT) form a disordered region. The span at 227–246 (KYLEDRQIPTKKESNTEDDT) shows a compositional bias: basic and acidic residues.

Belongs to the LAZY family. Expressed in roots.

Involved in the development of the root system architecture by influencing lateral root angles and primary root length. The polypeptide is Protein DEEPER ROOTING 1 (Prunus persica (Peach)).